The primary structure comprises 294 residues: Shikimate dehydrogenase (NADP(+)) (294 aa).

Residues 14–16 (SKS) and threonine 61 each bind shikimate. Lysine 65 acts as the Proton acceptor in catalysis. Aspartate 77 is a binding site for NADP(+). Positions 86 and 102 each coordinate shikimate. NADP(+) contacts are provided by residues 140 to 144 (GSGGA) and leucine 235. Residue tyrosine 237 coordinates shikimate. NADP(+) is bound at residue glycine 259.

Belongs to the shikimate dehydrogenase family. In terms of assembly, homodimer.

It carries out the reaction shikimate + NADP(+) = 3-dehydroshikimate + NADPH + H(+). It participates in metabolic intermediate biosynthesis; chorismate biosynthesis; chorismate from D-erythrose 4-phosphate and phosphoenolpyruvate: step 4/7. Functionally, involved in the biosynthesis of the chorismate, which leads to the biosynthesis of aromatic amino acids. Catalyzes the reversible NADPH linked reduction of 3-dehydroshikimate (DHSA) to yield shikimate (SA). This Blochmanniella floridana protein is Shikimate dehydrogenase (NADP(+)).